Here is a 449-residue protein sequence, read N- to C-terminus: Tubulin alpha chain (449 aa).

Residues 1-4 (MREC) carry the MREC motif motif. Q11 contributes to the GTP binding site. K40 is subject to N6-acetyllysine. The GTP site is built by E71, S140, G144, T145, T179, N206, and N228. E71 is a binding site for Mg(2+). E254 is an active-site residue. E443 carries the 5-glutamyl polyglutamate modification.

This sequence belongs to the tubulin family. In terms of assembly, dimer of alpha and beta chains. A typical microtubule is a hollow water-filled tube with an outer diameter of 25 nm and an inner diameter of 15 nM. Alpha-beta heterodimers associate head-to-tail to form protofilaments running lengthwise along the microtubule wall with the beta-tubulin subunit facing the microtubule plus end conferring a structural polarity. Microtubules usually have 13 protofilaments but different protofilament numbers can be found in some organisms and specialized cells. Mg(2+) is required as a cofactor. In terms of processing, some glutamate residues at the C-terminus are polyglycylated, resulting in polyglycine chains on the gamma-carboxyl group. Glycylation is mainly limited to tubulin incorporated into axonemes (cilia and flagella) whereas glutamylation is prevalent in neuronal cells, centrioles, axonemes, and the mitotic spindle. Both modifications can coexist on the same protein on adjacent residues, and lowering polyglycylation levels increases polyglutamylation, and reciprocally. The precise function of polyglycylation is still unclear. Post-translationally, some glutamate residues at the C-terminus are polyglutamylated, resulting in polyglutamate chains on the gamma-carboxyl group. Polyglutamylation plays a key role in microtubule severing by spastin (SPAST). SPAST preferentially recognizes and acts on microtubules decorated with short polyglutamate tails: severing activity by SPAST increases as the number of glutamates per tubulin rises from one to eight, but decreases beyond this glutamylation threshold. Acetylation of alpha chains at Lys-40 is located inside the microtubule lumen. This modification has been correlated with increased microtubule stability, intracellular transport and ciliary assembly. In terms of processing, undergoes a tyrosination/detyrosination cycle, the cyclic removal and re-addition of a C-terminal tyrosine residue by the enzymes tubulin tyrosine carboxypeptidase (MATCAP1, VASH1 or VASH2) and tubulin tyrosine ligase (TTL), respectively. Post-translationally, tyrosination promotes microtubule interaction with CAP-Gly microtubule plus-end tracking proteins. Tyrosinated tubulins regulate the initiation of dynein-driven motility. Detyrosination is involved in metaphase plate congression by guiding chromosomes during mitosis. Detyrosination increases microtubules-dependent mechanotransduction in dystrophic cardiac and skeletal muscle. In cardiomyocytes, detyrosinated microtubules are required to resist to contractile compression during contraction.

Its subcellular location is the cytoplasm. It is found in the cytoskeleton. The catalysed reaction is GTP + H2O = GDP + phosphate + H(+). Functionally, tubulin is the major constituent of microtubules, a cylinder consisting of laterally associated linear protofilaments composed of alpha- and beta-tubulin heterodimers. Microtubules grow by the addition of GTP-tubulin dimers to the microtubule end, where a stabilizing cap forms. Below the cap, tubulin dimers are in GDP-bound state, owing to GTPase activity of alpha-tubulin. The polypeptide is Tubulin alpha chain (tuba) (Xenopus tropicalis (Western clawed frog)).